Here is a 1212-residue protein sequence, read N- to C-terminus: uncharacterized protein (1212 aa).

Polar residues predominate over residues methionine 1–tyrosine 31. Disordered stretches follow at residues methionine 1–glutamine 70, proline 119–asparagine 169, serine 211–asparagine 231, isoleucine 248–lysine 374, glutamine 655–glutamine 681, asparagine 935–alanine 957, and glutamine 973–glutamine 1125. Composition is skewed to low complexity over residues proline 48–glutamine 70 and proline 119–asparagine 163. Over residues asparagine 256–asparagine 275 the composition is skewed to low complexity. 2 stretches are compositionally biased toward polar residues: residues lysine 276–serine 285 and tyrosine 292–proline 317. Residues isoleucine 322–glutamine 340 are compositionally biased toward low complexity. Residues threonine 341–histidine 351 show a composition bias toward polar residues. Low complexity predominate over residues asparagine 352 to asparagine 373. 2 stretches are compositionally biased toward low complexity: residues asparagine 998–asparagine 1022 and glutamine 1037–glutamine 1125.

This is an uncharacterized protein from Dictyostelium discoideum (Social amoeba).